The following is a 478-amino-acid chain: Tubulin gamma chain (478 aa).

141–147 (AGGTGSG) contacts GTP. Positions 451 to 478 (ISQKESSSLANENGNGANNKPGKSAMAL) are disordered. Residues 459 to 468 (LANENGNGAN) are compositionally biased toward polar residues.

This sequence belongs to the tubulin family.

It is found in the cytoplasm. It localises to the cytoskeleton. The protein localises to the microtubule organizing center. The protein resides in the centrosome. Functionally, tubulin is the major constituent of microtubules. The gamma chain is found at microtubule organizing centers (MTOC) such as the spindle poles or the centrosome, suggesting that it is involved in the minus-end nucleation of microtubule assembly. This Reticulomyxa filosa protein is Tubulin gamma chain.